Reading from the N-terminus, the 238-residue chain is Ribonuclease PH (238 aa).

Phosphate-binding positions include Arg86 and 124-126; that span reads GTR.

This sequence belongs to the RNase PH family. In terms of assembly, homohexameric ring arranged as a trimer of dimers.

It catalyses the reaction tRNA(n+1) + phosphate = tRNA(n) + a ribonucleoside 5'-diphosphate. Functionally, phosphorolytic 3'-5' exoribonuclease that plays an important role in tRNA 3'-end maturation. Removes nucleotide residues following the 3'-CCA terminus of tRNAs; can also add nucleotides to the ends of RNA molecules by using nucleoside diphosphates as substrates, but this may not be physiologically important. Probably plays a role in initiation of 16S rRNA degradation (leading to ribosome degradation) during starvation. The polypeptide is Ribonuclease PH (Psychrobacter arcticus (strain DSM 17307 / VKM B-2377 / 273-4)).